The sequence spans 402 residues: Beta-1,4-galactosyltransferase 1 (402 aa).

The Cytoplasmic portion of the chain corresponds to 1-24 (MKFREPLLGGSAAMPGASLQRACR). Residues 25–44 (LLVAVCALHLGVTLVYYLAG) traverse the membrane as a helical; Signal-anchor for type II membrane protein segment. At 45-402 (RDLRRLPQLV…KITVDIGTPS (358 aa)) the chain is on the lumenal side. A disordered region spans residues 77–130 (LRLRGVAPPPPLQNSSKPRSRAPSNLDAYSHPGPGPGPGSNLTSAPVPSTTTRS). 2 N-linked (GlcNAc...) asparagine glycosylation sites follow: asparagine 90 and asparagine 117. Residues 116 to 130 (SNLTSAPVPSTTTRS) are compositionally biased toward polar residues. Cysteines 134 and 176 form a disulfide. Residues 187-191 (PFRNR), 226-228 (FNR), 253-254 (VD), and tryptophan 314 each bind UDP-alpha-D-galactose. An intrachain disulfide couples cysteine 247 to cysteine 266. Aspartate 254 provides a ligand contact to Mn(2+). 316–319 (GEDD) lines the N-acetyl-D-glucosamine pocket. Histidine 347 provides a ligand contact to Mn(2+). 347–349 (HSR) is a UDP-alpha-D-galactose binding site. Arginine 359 is a binding site for N-acetyl-D-glucosamine.

Belongs to the glycosyltransferase 7 family. As to quaternary structure, homodimer; and heterodimer with alpha-lactalbumin to form lactose synthase. Interacts (via N-terminal cytoplasmic domain) with UBE2Q1 (via N-terminus); the interaction is direct. Requires Mn(2+) as cofactor. In terms of processing, the soluble form derives from the membrane forms by proteolytic processing. Detected in milk (at protein level).

Its subcellular location is the golgi apparatus. It is found in the golgi stack membrane. The protein localises to the cell membrane. It localises to the cell surface. The protein resides in the cell projection. Its subcellular location is the filopodium. It is found in the secreted. The catalysed reaction is D-glucose + UDP-alpha-D-galactose = lactose + UDP + H(+). The enzyme catalyses an N-acetyl-beta-D-glucosaminyl derivative + UDP-alpha-D-galactose = a beta-D-galactosyl-(1-&gt;4)-N-acetyl-beta-D-glucosaminyl derivative + UDP + H(+). It catalyses the reaction N-acetyl-D-glucosamine + UDP-alpha-D-galactose = beta-D-galactosyl-(1-&gt;4)-N-acetyl-D-glucosamine + UDP + H(+). It carries out the reaction a beta-D-GlcNAc-(1-&gt;3)-beta-D-Gal-(1-&gt;4)-beta-D-Glc-(1&lt;-&gt;1)-Cer(d18:1(4E)) + UDP-alpha-D-galactose = a neolactoside nLc4Cer(d18:1(4E)) + UDP + H(+). The catalysed reaction is a beta-D-glucosylceramide + UDP-alpha-D-galactose = a beta-D-galactosyl-(1-&gt;4)-beta-D-glucosyl-(1&lt;-&gt;1)-ceramide + UDP + H(+). The enzyme catalyses a neolactoside IV(3)-beta-GlcNAc-nLc4Cer + UDP-alpha-D-galactose = a neolactoside nLc6Cer + UDP + H(+). The protein operates within protein modification; protein glycosylation. Functionally, the Golgi complex form catalyzes the production of lactose in the lactating mammary gland and could also be responsible for the synthesis of complex-type N-linked oligosaccharides in many glycoproteins as well as the carbohydrate moieties of glycolipids. Its function is as follows. The cell surface form functions as a recognition molecule during a variety of cell to cell and cell to matrix interactions, as those occurring during development and egg fertilization, by binding to specific oligosaccharide ligands on opposing cells or in the extracellular matrix. The secreted form is responsible for the synthesis of complex-type to N-linked oligosaccharides in many glycoproteins as well as the carbohydrate moieties of glycolipids. The protein is Beta-1,4-galactosyltransferase 1 (B4GALT1) of Bos taurus (Bovine).